Reading from the N-terminus, the 171-residue chain is Neuronal vesicle trafficking-associated protein 2 (171 aa).

A disordered region spans residues 1 to 21 (MVKLNGNPGEKGAKPPSVEDG). At 1–71 (MVKLNGNPGE…FRVPKIAEFT (71 aa)) the chain is on the cytoplasmic side. Residues 72–92 (VTILVSLALAFLACIVFLVVY) form a helical; Signal-anchor for type II membrane protein membrane-spanning segment. Residues 93–171 (KAFTYDHSCP…EPKPPKTQGH (79 aa)) are Lumenal-facing.

It belongs to the NSG family.

It localises to the membrane. Its subcellular location is the golgi apparatus. It is found in the trans-Golgi network membrane. The protein localises to the cell projection. The protein resides in the dendrite. It localises to the endosome membrane. Its subcellular location is the early endosome membrane. It is found in the late endosome membrane. The protein localises to the lysosome lumen. The protein resides in the cytoplasmic vesicle membrane. It localises to the golgi stack membrane. Its subcellular location is the endosome. It is found in the multivesicular body membrane. The chain is Neuronal vesicle trafficking-associated protein 2 from Rattus norvegicus (Rat).